Reading from the N-terminus, the 500-residue chain is Potassium/proton antiporter CemA (500 aa).

A helical membrane pass occupies residues 129–149 (LFLTTIKTIFILFFVPFLVNF). The tract at residues 204–354 (HQTHRDSKPL…GSLDSIKNKD (151 aa)) is insert. 3 consecutive transmembrane segments (helical) span residues 378–398 (ITNF…LITL), 425–445 (ILLI…ELFF), and 461–481 (IFLL…YLIF).

This sequence belongs to the CemA family.

It localises to the plastid. Its subcellular location is the chloroplast inner membrane. The enzyme catalyses K(+)(in) + H(+)(out) = K(+)(out) + H(+)(in). Its function is as follows. Contributes to K(+)/H(+) antiport activity by supporting proton efflux to control proton extrusion and homeostasis in chloroplasts in a light-dependent manner to modulate photosynthesis. Prevents excessive induction of non-photochemical quenching (NPQ) under continuous-light conditions. Indirectly promotes efficient inorganic carbon uptake into chloroplasts. The chain is Potassium/proton antiporter CemA from Chlamydomonas reinhardtii (Chlamydomonas smithii).